Reading from the N-terminus, the 241-residue chain is Large ribosomal subunit protein uL3 (241 aa).

Disordered regions lie at residues V139–G164 and D215–A241. An N5-methylglutamine modification is found at Q151.

It belongs to the universal ribosomal protein uL3 family. In terms of assembly, part of the 50S ribosomal subunit. Forms a cluster with proteins L14 and L19. Methylated by PrmB.

Its function is as follows. One of the primary rRNA binding proteins, it binds directly near the 3'-end of the 23S rRNA, where it nucleates assembly of the 50S subunit. This Rhodopseudomonas palustris (strain BisB5) protein is Large ribosomal subunit protein uL3.